A 100-amino-acid polypeptide reads, in one-letter code: Elevenin-Vc1 (100 aa).

The first 24 residues, 1-24 (MAPSQKALLVLVLSMLLTASDSWA), serve as a signal peptide directing secretion. A disulfide bridge links cysteine 29 with cysteine 38. Positions 44–100 (KRGGDSLSVGGSAELDDALTDPFLRSEEPREWRELTRLSRVLQTFLSHPTGETEQHD) are excised as a propeptide.

The protein belongs to the elevenin family. Monomer. Expressed by the venom duct.

It localises to the secreted. In terms of biological role, may mimic the function of prey elevenin neuropeptide. In vivo, intracranial injection in mice induces hyperactivity (tested at 5 and 10 nM). The polypeptide is Elevenin-Vc1 (Conus victoriae (Queen Victoria cone)).